The primary structure comprises 341 residues: Anthranilate phosphoribosyltransferase (341 aa).

5-phospho-alpha-D-ribose 1-diphosphate contacts are provided by residues Gly-79, 82 to 83 (GD), Thr-87, 89 to 92 (NIST), 107 to 115 (KHGGRSVSS), and Ser-119. Position 79 (Gly-79) interacts with anthranilate. Ser-91 is a binding site for Mg(2+). Arg-165 serves as a coordination point for anthranilate. 2 residues coordinate Mg(2+): Asp-224 and Glu-225.

It belongs to the anthranilate phosphoribosyltransferase family. In terms of assembly, homodimer. The cofactor is Mg(2+).

The catalysed reaction is N-(5-phospho-beta-D-ribosyl)anthranilate + diphosphate = 5-phospho-alpha-D-ribose 1-diphosphate + anthranilate. It functions in the pathway amino-acid biosynthesis; L-tryptophan biosynthesis; L-tryptophan from chorismate: step 2/5. Functionally, catalyzes the transfer of the phosphoribosyl group of 5-phosphorylribose-1-pyrophosphate (PRPP) to anthranilate to yield N-(5'-phosphoribosyl)-anthranilate (PRA). This chain is Anthranilate phosphoribosyltransferase, found in Ruminiclostridium cellulolyticum (strain ATCC 35319 / DSM 5812 / JCM 6584 / H10) (Clostridium cellulolyticum).